The following is a 101-amino-acid chain: Small ribosomal subunit protein uS14 (101 aa).

Belongs to the universal ribosomal protein uS14 family. As to quaternary structure, part of the 30S ribosomal subunit. Contacts proteins S3 and S10.

Functionally, binds 16S rRNA, required for the assembly of 30S particles and may also be responsible for determining the conformation of the 16S rRNA at the A site. This Cereibacter sphaeroides (strain ATCC 17029 / ATH 2.4.9) (Rhodobacter sphaeroides) protein is Small ribosomal subunit protein uS14.